The sequence spans 307 residues: GTPase Era (307 aa).

An Era-type G domain is found at 7–181; the sequence is RCGWVALLGP…VKLVKSKLPV (175 aa). The segment at 15 to 22 is G1; the sequence is GPPNAGKS. 15-22 contributes to the GTP binding site; that stretch reads GPPNAGKS. Residues 41 to 45 form a G2 region; it reads QTTRN. The G3 stretch occupies residues 62–65; it reads DTPG. Residues 62–66 and 130–133 contribute to the GTP site; these read DTPGI and NKVD. The segment at 130–133 is G4; it reads NKVD. The G5 stretch occupies residues 160-162; sequence VSA. Residues 212–290 enclose the KH type-2 domain; it reads LRQELPYSVA…HLELWVKVRE (79 aa).

It belongs to the TRAFAC class TrmE-Era-EngA-EngB-Septin-like GTPase superfamily. Era GTPase family. In terms of assembly, monomer.

The protein localises to the cytoplasm. It localises to the cell inner membrane. In terms of biological role, an essential GTPase that binds both GDP and GTP, with rapid nucleotide exchange. Plays a role in 16S rRNA processing and 30S ribosomal subunit biogenesis and possibly also in cell cycle regulation and energy metabolism. The sequence is that of GTPase Era from Nitratidesulfovibrio vulgaris (strain DSM 19637 / Miyazaki F) (Desulfovibrio vulgaris).